A 135-amino-acid polypeptide reads, in one-letter code: Putative pre-16S rRNA nuclease (135 aa).

Belongs to the YqgF nuclease family.

The protein localises to the cytoplasm. In terms of biological role, could be a nuclease involved in processing of the 5'-end of pre-16S rRNA. In Christiangramia forsetii (strain DSM 17595 / CGMCC 1.15422 / KT0803) (Gramella forsetii), this protein is Putative pre-16S rRNA nuclease.